A 122-amino-acid polypeptide reads, in one-letter code: Protein 7a (122 aa).

A signal peptide spans 1–15 (MKIILFLTLIALATC). The region spanning 16 to 81 (ELYHYQECVR…RHTYQLRARS (66 aa)) is the X4e domain. Residues 16-96 (ELYHYQECVR…FIRQEEVYQE (81 aa)) lie on the Virion surface side of the membrane. 2 disulfide bridges follow: C23/C58 and C35/C67. The chain crosses the membrane as a helical span at residues 97–117 (LYSPLFLIVAALVFIILCFTI). The Intravirion portion of the chain corresponds to 118-122 (KRKTE). The Di-lysine motif motif lies at 118 to 122 (KRKTE).

In terms of assembly, interacts with the spike glycoprotein, M protein, E protein and the accessory protein 3.

It is found in the virion. The protein resides in the host endoplasmic reticulum membrane. Its subcellular location is the host endoplasmic reticulum-Golgi intermediate compartment membrane. The protein localises to the host Golgi apparatus membrane. Its function is as follows. Non-structural protein which is dispensable for virus replication in cell culture. This is Protein 7a from Bat coronavirus HKU3 (BtCoV).